A 239-amino-acid chain; its full sequence is Serine protease SplD (239 aa).

A signal peptide spans 1–36 (MNKNIIIKSIAALTILTSITGVGTTVVDGIQQTAKA). Active-site charge relay system residues include His75, Asp114, and Ser192.

The protein belongs to the peptidase S1B family.

It is found in the secreted. This chain is Serine protease SplD (splD), found in Staphylococcus aureus (strain Mu3 / ATCC 700698).